The chain runs to 490 residues: Cytochrome P450 2C26 (490 aa).

Residue C435 participates in heme binding.

It belongs to the cytochrome P450 family. The cofactor is heme.

It is found in the endoplasmic reticulum membrane. The protein localises to the microsome membrane. It carries out the reaction an organic molecule + reduced [NADPH--hemoprotein reductase] + O2 = an alcohol + oxidized [NADPH--hemoprotein reductase] + H2O + H(+). In terms of biological role, catalyzes the hydroxylation of tolbutamide and the N-demethylation of aminopyrine and benzphetamine. The chain is Cytochrome P450 2C26 (CYP2C26) from Mesocricetus auratus (Golden hamster).